The chain runs to 338 residues: Trans-enoyl reductase fsr4 (338 aa).

65 to 68 (KDWK) contacts NADP(+). Substrate is bound at residue 147 to 153 (AAFTAAC). Residues 182–185 (SSAV), 205–208 (AGRA), Tyr227, and 277–278 (II) contribute to the NADP(+) site.

It belongs to the zinc-containing alcohol dehydrogenase family.

Functionally, trans-enoyl reductase; part of the gene cluster that mediates the biosynthesis of fusarubins, highly pigmented naphthoquinones responsible for the coloration of the fruiting bodies. The non-reducing polyketide synthase FSR1 is responsible for the condensation of seven acetyl-CoA units to yield a haptaketide. After rings A and B are formed by aldol-type cyclization, the PKS-derived product is released as 6-O-demethylfusarubinaldehyde. Then, two hydroxyl groups at C-5 and C-10 are incorporated by FSR3, and simultaneously hydroxyl groups at C-6 and C-8 are methylated by FSR2. The aldehyde is, on the one hand, reduced by FSR3 to 8-O-methylfusarubin alcohol, which equilibrates mainly with 8-O-methylfusarubin and only small amounts of 8-O-methylnectriafurone. On the other hand, the aldehyde can be oxidized to form 8-O-methylfusarubinic acid, a reaction driven by FSR3 equilibrating with 8-O-methylfusarubinlactone, finally resulting in 8-O-methylanhydrofusarubinlactol after a further reduction step and loss of water. 8-O-Methylfusarubinic acid can also undergo decarboxylation, resulting in 8-O-methyl-13-hydroxynorjavanicin after another hydroxylation step at C-13. Both steps are most likely also accomplished by FSR3. No enzymatic function has been determined so far for either FSR4 and FSR5. Their deletion does not alter the product spectrum, but the possibility that they catalyze specific enzymatic steps during perithecium development cannot be ruled out. FSR4 might possess a regulatory function in the biosynthesis of fusarubins. The chain is Trans-enoyl reductase fsr4 from Gibberella fujikuroi (strain CBS 195.34 / IMI 58289 / NRRL A-6831) (Bakanae and foot rot disease fungus).